We begin with the raw amino-acid sequence, 308 residues long: Ribosomal RNA large subunit methyltransferase F (308 aa).

Belongs to the methyltransferase superfamily. METTL16/RlmF family.

It localises to the cytoplasm. The catalysed reaction is adenosine(1618) in 23S rRNA + S-adenosyl-L-methionine = N(6)-methyladenosine(1618) in 23S rRNA + S-adenosyl-L-homocysteine + H(+). Its function is as follows. Specifically methylates the adenine in position 1618 of 23S rRNA. The chain is Ribosomal RNA large subunit methyltransferase F from Escherichia coli (strain K12 / MC4100 / BW2952).